A 451-amino-acid chain; its full sequence is Tubulin alpha-1B chain (451 aa).

Residues 1-4 carry the MREC motif motif; it reads MREC. GTP is bound by residues Gly-10, Gln-11, Ala-12, and Gln-15. Lys-40 carries the N6,N6,N6-trimethyllysine; alternate modification. Lys-40 carries the N6-acetyllysine; alternate modification. Residue Ser-48 is modified to Phosphoserine. Positions 71, 99, 140, 143, 144, 145, 146, 179, 183, 206, 224, and 228 each coordinate GTP. Glu-71 serves as a coordination point for Mg(2+). Position 232 is a phosphoserine (Ser-232). GTP is bound at residue Leu-252. Glu-254 is an active-site residue. Tyr-282 is modified (3'-nitrotyrosine). Lys-326 participates in a covalent cross-link: Glycyl lysine isopeptide (Lys-Gly) (interchain with G-Cter in ubiquitin). The residue at position 339 (Arg-339) is an Omega-N-methylarginine. Lys-370 participates in a covalent cross-link: Glycyl lysine isopeptide (Lys-Gly) (interchain with G-Cter in ubiquitin). Positions 432-451 are disordered; sequence YEEVGVDSVEGEGEEEGEEY. Ser-439 is modified (phosphoserine). Glu-443 and Glu-445 each carry 5-glutamyl polyglutamate. At Tyr-451 the chain carries 3'-nitrotyrosine.

Belongs to the tubulin family. In terms of assembly, heterodimer of alpha- and beta-tubulin. A typical microtubule is a hollow water-filled tube with an outer diameter of 25 nm and an inner diameter of 15 nM. Alpha-beta heterodimers associate head-to-tail to form protofilaments running lengthwise along the microtubule wall with the beta-tubulin subunit facing the microtubule plus end conferring a structural polarity. Microtubules usually have 13 protofilaments but different protofilament numbers can be found in some organisms and specialized cells. Interacts with gamma-tubulin; the interaction allows microtubules to nucleate from the gamma-tubulin ring complex (gTuRC). Nascent microtubule interacts (via alpha-tubulin MREC motif) with TTC5/STRAP; this interaction may result in tubulin mRNA-targeted degradation. Component of sperm flagellar doublet microtubules. Mg(2+) serves as cofactor. In terms of processing, some glutamate residues at the C-terminus are polyglutamylated, resulting in polyglutamate chains on the gamma-carboxyl group. Polyglutamylation plays a key role in microtubule severing by spastin (SPAST). SPAST preferentially recognizes and acts on microtubules decorated with short polyglutamate tails: severing activity by SPAST increases as the number of glutamates per tubulin rises from one to eight, but decreases beyond this glutamylation threshold. Glutamylation is also involved in cilia motility. Some glutamate residues at the C-terminus are monoglycylated but not polyglycylated due to the absence of functional TTLL10 in human. Monoglycylation is mainly limited to tubulin incorporated into cilia and flagella axonemes, which is required for their stability and maintenance. Flagella glycylation controls sperm motility. Both polyglutamylation and monoglycylation can coexist on the same protein on adjacent residues, and lowering glycylation levels increases polyglutamylation, and reciprocally. Post-translationally, acetylation of alpha chains at Lys-40 is located inside the microtubule lumen. This modification has been correlated with increased microtubule stability, intracellular transport and ciliary assembly. In terms of processing, methylation of alpha chains at Lys-40 is found in mitotic microtubules and is required for normal mitosis and cytokinesis contributing to genomic stability. Nitration of Tyr-451 is irreversible and interferes with normal dynein intracellular distribution. Post-translationally, undergoes a tyrosination/detyrosination cycle, the cyclic removal and re-addition of a C-terminal tyrosine residue by the enzymes tubulin tyrosine carboxypeptidase (MATCAP1/KIAA0895L, VASH1 or VASH2) and tubulin tyrosine ligase (TTL), respectively. In terms of processing, tyrosination promotes microtubule interaction with CAP-Gly domain-containing proteins such as CLIP1, CLIP2 and DCTN1. Tyrosination regulates the initiation of dynein-dynactin motility via interaction with DCTN1, which brings the dynein-dynactin complex into contact with microtubules. In neurons, tyrosinated tubulins mediate the initiation of retrograde vesicle transport. Detyrosination is involved in metaphase plate congression by guiding chromosomes during mitosis: detyrosination promotes interaction with CENPE, promoting pole-proximal transport of chromosomes toward the equator. Detyrosination increases microtubules-dependent mechanotransduction in dystrophic cardiac and skeletal muscle. In cardiomyocytes, detyrosinated microtubules are required to resist to contractile compression during contraction: detyrosination promotes association with desmin (DES) at force-generating sarcomeres, leading to buckled microtubules and mechanical resistance to contraction.

The protein resides in the cytoplasm. It is found in the cytoskeleton. The enzyme catalyses GTP + H2O = GDP + phosphate + H(+). Functionally, tubulin is the major constituent of microtubules, protein filaments consisting of alpha- and beta-tubulin heterodimers. Microtubules grow by the addition of GTP-tubulin dimers to the microtubule end, where a stabilizing cap forms. Below the cap, tubulin dimers are in GDP-bound state, owing to GTPase activity of alpha-tubulin. In Homo sapiens (Human), this protein is Tubulin alpha-1B chain (TUBA1B).